The chain runs to 661 residues: uncharacterized protein (661 aa).

The signal sequence occupies residues Met1–Ala24. A run of 6 helical transmembrane segments spans residues Ile226 to Thr246, Ile254 to Leu274, Ile410 to Ile430, Cys436 to Phe456, Val469 to Thr489, and Val562 to Phe582. Residues Gly629 to Lys661 form a disordered region.

It belongs to the TrbL/VirB6 family.

The protein resides in the cell membrane. This is an uncharacterized protein from Rickettsia conorii (strain ATCC VR-613 / Malish 7).